We begin with the raw amino-acid sequence, 472 residues long: Trigger factor (472 aa).

Residues 172 to 257 (GDEVRFDFKG…IKEITSVKPQ (86 aa)) form the PPIase FKBP-type domain. Composition is skewed to polar residues over residues 439–449 (NQPKDTASTLS) and 461–472 (KTSNTKKVASKK). Residues 439 to 472 (NQPKDTASTLSKQEDKPKVAKAKTSNTKKVASKK) form a disordered region.

The protein belongs to the FKBP-type PPIase family. Tig subfamily.

It is found in the cytoplasm. The enzyme catalyses [protein]-peptidylproline (omega=180) = [protein]-peptidylproline (omega=0). In terms of biological role, involved in protein export. Acts as a chaperone by maintaining the newly synthesized protein in an open conformation. Functions as a peptidyl-prolyl cis-trans isomerase. The sequence is that of Trigger factor from Ureaplasma urealyticum serovar 10 (strain ATCC 33699 / Western).